We begin with the raw amino-acid sequence, 187 residues long: Elongation factor P (187 aa).

The protein belongs to the elongation factor P family.

The protein localises to the cytoplasm. The protein operates within protein biosynthesis; polypeptide chain elongation. In terms of biological role, involved in peptide bond synthesis. Stimulates efficient translation and peptide-bond synthesis on native or reconstituted 70S ribosomes in vitro. Probably functions indirectly by altering the affinity of the ribosome for aminoacyl-tRNA, thus increasing their reactivity as acceptors for peptidyl transferase. This chain is Elongation factor P, found in Mycobacterium avium (strain 104).